Here is a 507-residue protein sequence, read N- to C-terminus: Zinc finger protein Aiolos (507 aa).

The interval 1 to 85 (MEDIQPTVEL…PMGDAEESEM (85 aa)) is disordered. At Thr-20 the chain carries Phosphothreonine. Phosphoserine occurs at positions 22 and 42. Basic and acidic residues-rich tracts occupy residues 33–46 (KPHE…REAP) and 56–72 (DSMK…ENIM). Glycyl lysine isopeptide (Lys-Gly) (interchain with G-Cter in SUMO2) cross-links involve residues Lys-61, Lys-73, and Lys-100. C2H2-type zinc fingers lie at residues 117-139 (MNCD…KRSH), 145-167 (FQCN…IKLH), and 173-195 (FKCH…LRTH). The segment at 201-223 (YKCEFCGRSYKQRSSLEEHKERC) adopts a C2H2-type 4; atypical zinc-finger fold. A Glycyl lysine isopeptide (Lys-Gly) (interchain with G-Cter in SUMO2) cross-link involves residue Lys-244. Thr-325 bears the Phosphothreonine mark. The tract at residues 370-396 (LPSERGLSPNNSAQDSTDTDSNHEDRQ) is disordered. Residue Ser-377 is modified to Phosphoserine. The C2H2-type 5 zinc finger occupies 450–472 (FRCDHCHVLFLDYVMFTIHMGCH). A mediates homodimerization and heterodimerization region spans residues 450 to 502 (FRCDHCHVLFLDYVMFTIHMGCHGFRDPFECNMCGYRSHDRYEFSSHIARGEH). The segment at 478 to 502 (FECNMCGYRSHDRYEFSSHIARGEH) adopts a C2H2-type 6; atypical zinc-finger fold.

Belongs to the Ikaros C2H2-type zinc-finger protein family. As to quaternary structure, homodimer. Heterodimer with other IKAROS family members. Interacts with IKZF4 and IKZF5. Interacts with HRAS. Interacts with FOXP3; this interaction may be required for silencing target genes and regulating the suppressive activity of FOXP3-positive regulatory T-cells (Treg). Interacts with BCL21L isoform Bcl-X(L); this interaction blocks the anti-apoptotic role of BCL21L. Associates with histone deacetylase complexes containing HDAC1, MTA2 and SIN3A. Interacts with IKZF1. Expression is restricted to lymphoid tissues. Expressed at highest levels in spleen and at lower levels in the thymus and bone marrow. First detected in more committed lymphoid progenitors and strongly up-regulated as these differentiate into pre-T and pre-B cell precursors.

It localises to the nucleus. The protein localises to the cytoplasm. Its function is as follows. Transcription factor that plays an important role in the regulation of lymphocyte differentiation. Binds to GGGAA. Plays an essential role in regulation of B-cell differentiation, proliferation and maturation to an effector state. Involved in regulating BCL2 expression and controlling apoptosis in T-cells in an IL2-dependent manner. In Mus musculus (Mouse), this protein is Zinc finger protein Aiolos (Ikzf3).